A 124-amino-acid chain; its full sequence is Large ribosomal subunit protein bL21 (124 aa).

The protein belongs to the bacterial ribosomal protein bL21 family. Part of the 50S ribosomal subunit. Contacts protein L20.

This protein binds to 23S rRNA in the presence of protein L20. The sequence is that of Large ribosomal subunit protein bL21 from Synechocystis sp. (strain ATCC 27184 / PCC 6803 / Kazusa).